The chain runs to 298 residues: ATP phosphoribosyltransferase (298 aa).

Belongs to the ATP phosphoribosyltransferase family. Long subfamily. Requires Mg(2+) as cofactor.

It is found in the cytoplasm. It catalyses the reaction 1-(5-phospho-beta-D-ribosyl)-ATP + diphosphate = 5-phospho-alpha-D-ribose 1-diphosphate + ATP. Its pathway is amino-acid biosynthesis; L-histidine biosynthesis; L-histidine from 5-phospho-alpha-D-ribose 1-diphosphate: step 1/9. Its activity is regulated as follows. Feedback inhibited by histidine. Its function is as follows. Catalyzes the condensation of ATP and 5-phosphoribose 1-diphosphate to form N'-(5'-phosphoribosyl)-ATP (PR-ATP). Has a crucial role in the pathway because the rate of histidine biosynthesis seems to be controlled primarily by regulation of HisG enzymatic activity. The chain is ATP phosphoribosyltransferase from Tolumonas auensis (strain DSM 9187 / NBRC 110442 / TA 4).